Here is a 101-residue protein sequence, read N- to C-terminus: Anti-sigma factor RshA (101 aa).

The interval 9-15 (DAHADHD) is inhibits SigH sigma factor activity. C23 is a binding site for iron-sulfur cluster. 2 inhibits SigH sigma factor activity regions span residues 28–34 (AEVWTLL) and 38–44 (CTPETRE). Iron-sulfur cluster-binding residues include H49, C53, and C56. T94 bears the Phosphothreonine mark.

The protein belongs to the zinc-associated anti-sigma factor (ZAS) superfamily. In terms of assembly, interacts with cognate sigma factor SigH under reducing conditions. Binding inhibits the interaction of SigH with the RNA polymerase catalytic core. Requires iron-sulfur cluster as cofactor. In terms of processing, phosphorylated, probably by PknB. Phosphorylation decreases interaction with SigH, leading to increased SigH-mediated transcription.

An redox-regulated anti-sigma factor for extracytoplasmic function (ECF) sigma factor SigH. ECF sigma factors are held in an inactive form by a cognate anti-sigma factor. RshA and some peptides derived from it inhibit the sigma factor activity of SigH. Probably releases SigH during oxidative stress. The chain is Anti-sigma factor RshA (rshA) from Mycobacterium tuberculosis (strain CDC 1551 / Oshkosh).